Here is a 465-residue protein sequence, read N- to C-terminus: Ribosomal oxygenase 2 (465 aa).

In terms of domain architecture, JmjC spans 139 to 271; that stretch reads QPQRFKDELW…NSWGDFLLDT (133 aa). Residues H179, D181, and H240 each coordinate Fe cation. A Phosphoserine modification is found at S309.

It belongs to the ROX family. MINA53 subfamily. Fe(2+) is required as a cofactor. In terms of tissue distribution, expressed in liver, skeletal muscle, heart, pancreas, and placenta. Not detected in brain, lung or kidney. Expressed in several lung cancer tissues, but is barely detected in the adjacent non-cancerous tissues. Also highly expressed in several esophageal squamous cell carcinoma (ESCC), and colon cancer tissues, and in various cancer cell lines.

Its subcellular location is the nucleus. The protein localises to the nucleolus. It carries out the reaction L-histidyl-[protein] + 2-oxoglutarate + O2 = (3S)-3-hydroxy-L-histidyl-[protein] + succinate + CO2. It catalyses the reaction L-histidyl-[ribosomal protein uL15] + 2-oxoglutarate + O2 = (3S)-3-hydroxy-L-histidyl-[ribosomal protein uL15] + succinate + CO2. Functionally, oxygenase that can act as both a histone lysine demethylase and a ribosomal histidine hydroxylase. Is involved in the demethylation of trimethylated 'Lys-9' on histone H3 (H3K9me3), leading to an increase in ribosomal RNA expression. Also catalyzes the hydroxylation of 60S ribosomal protein L27a on 'His-39'. May play an important role in cell growth and survival. May be involved in ribosome biogenesis, most likely during the assembly process of pre-ribosomal particles. This Homo sapiens (Human) protein is Ribosomal oxygenase 2.